The primary structure comprises 516 residues: Probable serine/threonine-protein kinase WNK3 (516 aa).

Residues 22–280 (GRYKEVLGKG…AKELLDDPFL (259 aa)) form the Protein kinase domain. ATP contacts are provided by residues 102-105 (TEVF) and Lys-152. Asp-169 acts as the Proton acceptor in catalysis. A disordered region spans residues 426–451 (SSPKAGAGDSRSPFAPRSNSKLSSAQ). Over residues 442-451 (RSNSKLSSAQ) the composition is skewed to polar residues. Positions 457 to 490 (EVGVIVEKLESLLRKQREEIEEMQRDQERIVTEF) form a coiled coil.

Belongs to the protein kinase superfamily. Ser/Thr protein kinase family. WNK subfamily.

The catalysed reaction is L-seryl-[protein] + ATP = O-phospho-L-seryl-[protein] + ADP + H(+). It carries out the reaction L-threonyl-[protein] + ATP = O-phospho-L-threonyl-[protein] + ADP + H(+). Functionally, may regulate flowering time by modulating the photoperiod pathway. This chain is Probable serine/threonine-protein kinase WNK3 (WNK3), found in Arabidopsis thaliana (Mouse-ear cress).